A 733-amino-acid polypeptide reads, in one-letter code: Ribosomal protein S6 kinase alpha-2 (733 aa).

One can recognise a Protein kinase 1 domain in the interval 59 to 318; that stretch reads FELLKVLGQG…VEEIKRHPFF (260 aa). Residues 65–73 and Lys-91 contribute to the ATP site; that span reads LGQGSYGKV. Residue Asp-184 is the Proton acceptor of the active site. Ser-218 is modified (phosphoserine; by PDPK1). The AGC-kinase C-terminal domain maps to 319–388; it reads VTIDWNKLYR…VASSLVQEPS (70 aa). Ser-377 is modified (phosphoserine). In terms of domain architecture, Protein kinase 2 spans 415–672; it reads YEIKEDIGVG…AVQVLKHPWI (258 aa). ATP is bound by residues 421–429 and Lys-444; that span reads IGVGSYSVC. The Proton acceptor role is filled by Asp-532.

This sequence belongs to the protein kinase superfamily. AGC Ser/Thr protein kinase family. S6 kinase subfamily. Forms a complex with either MAPK1/ERK2 or MAPK3/ERK1 in quiescent cells. Transiently dissociates following mitogenic stimulation. Interacts with FBXO5; cooperate to induce the metaphase arrest of early blastomeres; increases and stabilizes interaction of FBXO5 with CDC20. Mg(2+) serves as cofactor. Activated by phosphorylation at Ser-218 by PDPK1. Autophosphorylated on Ser-377, as part of the activation process. May be phosphorylated at Thr-356 and Ser-360 by MAPK1/ERK2 and MAPK3/ERK1. Post-translationally, N-terminal myristoylation results in an activated kinase in the absence of added growth factors.

It is found in the nucleus. It localises to the cytoplasm. The catalysed reaction is L-seryl-[protein] + ATP = O-phospho-L-seryl-[protein] + ADP + H(+). The enzyme catalyses L-threonyl-[protein] + ATP = O-phospho-L-threonyl-[protein] + ADP + H(+). Its activity is regulated as follows. Upon extracellular signal or mitogen stimulation, phosphorylated at Thr-570 in the C-terminal kinase domain (CTKD) by MAPK1/ERK2 and MAPK3/ERK1. The activated CTKD then autophosphorylates Ser-377, allowing binding of PDPK1, which in turn phosphorylates Ser-218 in the N-terminal kinase domain (NTDK) leading to the full activation of the protein and subsequent phosphorylation of the substrates by the NTKD. In terms of biological role, serine/threonine-protein kinase that acts downstream of ERK (MAPK1/ERK2 and MAPK3/ERK1) signaling and mediates mitogenic and stress-induced activation of transcription factors, regulates translation, and mediates cellular proliferation, survival, and differentiation. May function as tumor suppressor in epithelial ovarian cancer cells. In Mus musculus (Mouse), this protein is Ribosomal protein S6 kinase alpha-2 (Rps6ka2).